Reading from the N-terminus, the 307-residue chain is Aspartate carbamoyltransferase catalytic subunit (307 aa).

The carbamoyl phosphate site is built by R56 and T57. Position 84 (K84) interacts with L-aspartate. Positions 106, 136, and 139 each coordinate carbamoyl phosphate. L-aspartate is bound by residues R169 and R221. The carbamoyl phosphate site is built by A262 and P263.

This sequence belongs to the aspartate/ornithine carbamoyltransferase superfamily. ATCase family. Heterododecamer (2C3:3R2) of six catalytic PyrB chains organized as two trimers (C3), and six regulatory PyrI chains organized as three dimers (R2).

It catalyses the reaction carbamoyl phosphate + L-aspartate = N-carbamoyl-L-aspartate + phosphate + H(+). The protein operates within pyrimidine metabolism; UMP biosynthesis via de novo pathway; (S)-dihydroorotate from bicarbonate: step 2/3. Catalyzes the condensation of carbamoyl phosphate and aspartate to form carbamoyl aspartate and inorganic phosphate, the committed step in the de novo pyrimidine nucleotide biosynthesis pathway. In Streptococcus pneumoniae (strain JJA), this protein is Aspartate carbamoyltransferase catalytic subunit.